We begin with the raw amino-acid sequence, 461 residues long: tRNA(Ile)-lysidine synthase (461 aa).

26–31 serves as a coordination point for ATP; the sequence is SGGPDS.

It belongs to the tRNA(Ile)-lysidine synthase family.

It localises to the cytoplasm. The enzyme catalyses cytidine(34) in tRNA(Ile2) + L-lysine + ATP = lysidine(34) in tRNA(Ile2) + AMP + diphosphate + H(+). Ligates lysine onto the cytidine present at position 34 of the AUA codon-specific tRNA(Ile) that contains the anticodon CAU, in an ATP-dependent manner. Cytidine is converted to lysidine, thus changing the amino acid specificity of the tRNA from methionine to isoleucine. This chain is tRNA(Ile)-lysidine synthase, found in Clostridium acetobutylicum (strain ATCC 824 / DSM 792 / JCM 1419 / IAM 19013 / LMG 5710 / NBRC 13948 / NRRL B-527 / VKM B-1787 / 2291 / W).